Consider the following 233-residue polypeptide: Sugar fermentation stimulation protein homolog (233 aa).

Belongs to the SfsA family.

The sequence is that of Sugar fermentation stimulation protein homolog from Pyrobaculum neutrophilum (strain DSM 2338 / JCM 9278 / NBRC 100436 / V24Sta) (Thermoproteus neutrophilus).